A 106-amino-acid polypeptide reads, in one-letter code: ATP-dependent Clp protease adapter protein ClpS (106 aa).

The protein belongs to the ClpS family. As to quaternary structure, binds to the N-terminal domain of the chaperone ClpA.

In terms of biological role, involved in the modulation of the specificity of the ClpAP-mediated ATP-dependent protein degradation. This is ATP-dependent Clp protease adapter protein ClpS from Aliivibrio salmonicida (strain LFI1238) (Vibrio salmonicida (strain LFI1238)).